We begin with the raw amino-acid sequence, 636 residues long: Chaperone protein HtpG (636 aa).

The segment at 1-342 is a; substrate-binding; that stretch reads MSSETLEFQA…AHDLSLNISR (342 aa). Residues 343–558 form a b region; the sequence is ELLQQDRQIQ…AHDVTPTLEK (216 aa). Residues 559–636 form a c region; that stretch reads MYRAMGHEVP…ILAERLARTL (78 aa).

Belongs to the heat shock protein 90 family. Homodimer.

It localises to the cytoplasm. Molecular chaperone. Has ATPase activity. The polypeptide is Chaperone protein HtpG (Salinispora tropica (strain ATCC BAA-916 / DSM 44818 / JCM 13857 / NBRC 105044 / CNB-440)).